The following is an 81-amino-acid chain: MTDVFSQAQHQLDALGLRCPEPVMMVRKTVRKMADGETLLIIADDPATTRDIPSFCEFMDHTLIASDTSKTPYQYLLKKGR.

Cys-19 functions as the Cysteine persulfide intermediate in the catalytic mechanism.

It belongs to the sulfur carrier protein TusA family.

The protein localises to the cytoplasm. Sulfur carrier protein which probably makes part of a sulfur-relay system. This Shewanella denitrificans (strain OS217 / ATCC BAA-1090 / DSM 15013) protein is Sulfur carrier protein TusA.